A 314-amino-acid chain; its full sequence is DNA-directed RNA polymerase subunit alpha (314 aa).

The alpha N-terminal domain (alpha-NTD) stretch occupies residues 1–228 (MIEIEKPRIE…EHLNIFVGLT (228 aa)). The segment at 245–314 (KEKVLEMSIE…DLGLGLRKED (70 aa)) is alpha C-terminal domain (alpha-CTD).

The protein belongs to the RNA polymerase alpha chain family. Homodimer. The RNAP catalytic core consists of 2 alpha, 1 beta, 1 beta' and 1 omega subunit. When a sigma factor is associated with the core the holoenzyme is formed, which can initiate transcription.

It catalyses the reaction RNA(n) + a ribonucleoside 5'-triphosphate = RNA(n+1) + diphosphate. DNA-dependent RNA polymerase catalyzes the transcription of DNA into RNA using the four ribonucleoside triphosphates as substrates. The sequence is that of DNA-directed RNA polymerase subunit alpha from Staphylococcus aureus (strain bovine RF122 / ET3-1).